The primary structure comprises 367 residues: Folliculin-like protein bhd1 (367 aa).

2 disordered regions span residues 41–75 (RSIGVTENGNDSPEAFKNELDNRNNADSQSLQSST) and 92–115 (SKGPESPRVNSFHNSYSRNQSPIS). The segment covering 54–64 (EAFKNELDNRN) has biased composition (basic and acidic residues). Composition is skewed to polar residues over residues 65–75 (NADSQSLQSST) and 99–115 (RVNSFHNSYSRNQSPIS). The 172-residue stretch at 131-302 (FSVPDVQPRL…SNIGTAPSYE (172 aa)) folds into the uDENN FLCN/SMCR8-type domain.

The protein belongs to the folliculin family.

It localises to the nucleus. It is found in the cytoplasm. This is Folliculin-like protein bhd1 (bhd1) from Schizosaccharomyces pombe (strain 972 / ATCC 24843) (Fission yeast).